We begin with the raw amino-acid sequence, 201 residues long: dCTP deaminase, dUMP-forming (201 aa).

DCTP-binding positions include 101-106 (KSSLGR), D119, 127-129 (TLE), Q148, Y162, and Q174. The Proton donor/acceptor role is filled by E129. The segment covering 166 to 183 (EYSSRYQGQRGPTASRSF) has biased composition (polar residues). A disordered region spans residues 166-201 (EYSSRYQGQRGPTASRSFLNFHRTDVSGTEAGRSSS).

The protein belongs to the dCTP deaminase family. Homotrimer.

The catalysed reaction is dCTP + 2 H2O = dUMP + NH4(+) + diphosphate. The protein operates within pyrimidine metabolism; dUMP biosynthesis; dUMP from dCTP: step 1/1. In terms of biological role, bifunctional enzyme that catalyzes both the deamination of dCTP to dUTP and the hydrolysis of dUTP to dUMP without releasing the toxic dUTP intermediate. The protein is dCTP deaminase, dUMP-forming of Leifsonia xyli subsp. xyli (strain CTCB07).